Reading from the N-terminus, the 191-residue chain is UPF0312 protein Sden_2128 (191 aa).

A signal peptide spans Met1–Ala22.

The protein belongs to the UPF0312 family. Type 1 subfamily.

Its subcellular location is the periplasm. This Shewanella denitrificans (strain OS217 / ATCC BAA-1090 / DSM 15013) protein is UPF0312 protein Sden_2128.